The sequence spans 2028 residues: Phosphatidylinositol 4-kinase alpha 1 (2028 aa).

Positions 184–241 (PASPKEQRQQNSANSETDTSSSQGSPISTNRYPSGKTEMASPGDEVASHGSNLSSKSS) are disordered. Polar residues predominate over residues 192–215 (QQNSANSETDTSSSQGSPISTNRY). Over residues 231-241 (SHGSNLSSKSS) the composition is skewed to low complexity. One can recognise a PIK helical domain in the interval 1483–1659 (TEYAKTAFSV…NAAFQEILPQ (177 aa)). The tract at residues 1660 to 1773 (VRQHIIDGFS…VKPQACIFKV (114 aa)) is pleckstrin homology (PH) domain conferring phosphoinositide binding specificity. In terms of domain architecture, PI3K/PI4K catalytic spans 1734-2012 (VDSGIPLQSA…VCTDAYNKWT (279 aa)). The tract at residues 1740 to 1746 (LQSAAKV) is G-loop. Residues 1876 to 1884 (QPKDRHNGN) form a catalytic loop region. An activation loop region spans residues 1895–1920 (HIDFGFILETSPGGNMRFESAHFKLS).

The protein belongs to the PI3/PI4-kinase family. Type III PI4K subfamily. As to quaternary structure, interacts in vitro with actin filaments via its PH domain. As to expression, present in leaves and inflorescences.

It localises to the membrane. Its subcellular location is the cytoplasm. The protein resides in the perinuclear region. The catalysed reaction is a 1,2-diacyl-sn-glycero-3-phospho-(1D-myo-inositol) + ATP = a 1,2-diacyl-sn-glycero-3-phospho-(1D-myo-inositol 4-phosphate) + ADP + H(+). With respect to regulation, repressed by PtdIns4P, adenosine and wortmannin, but stimulated by other negatively charged lipids such as PtdIns3P, PtdOH, and phosphatidyl-serine (PtdSer). Functionally, acts on phosphatidylinositol (PtdIns) in the first committed step in the production of the second messenger inositol-1,4,5,-trisphosphate. Can bind to phosphatidylinositol 4-monophosphate (PI-4-P or PtdIns4P), phosphatidylinositol 4,5-bisphosphate (PI-4,5-P2 or PtdIns4,5P2), and phosphatidic acid (PtdOH), but not to 3-phosphoinositides. May function upstream of the cold response phosphoinositide-dependent phospholipase C (PI-PLC) pathway. The protein is Phosphatidylinositol 4-kinase alpha 1 of Arabidopsis thaliana (Mouse-ear cress).